The following is a 286-amino-acid chain: Thymidylate synthase (286 aa).

Position 140-141 (140-141 (RR)) interacts with dUMP. The Nucleophile role is filled by cysteine 161. DUMP contacts are provided by residues 185-188 (RSND), asparagine 196, and 226-228 (HIY). Aspartate 188 is a (6R)-5,10-methylene-5,6,7,8-tetrahydrofolate binding site. Alanine 285 serves as a coordination point for (6R)-5,10-methylene-5,6,7,8-tetrahydrofolate.

Belongs to the thymidylate synthase family. Bacterial-type ThyA subfamily. In terms of assembly, homodimer.

Its subcellular location is the cytoplasm. It carries out the reaction dUMP + (6R)-5,10-methylene-5,6,7,8-tetrahydrofolate = 7,8-dihydrofolate + dTMP. The protein operates within pyrimidine metabolism; dTTP biosynthesis. Catalyzes the reductive methylation of 2'-deoxyuridine-5'-monophosphate (dUMP) to 2'-deoxythymidine-5'-monophosphate (dTMP) while utilizing 5,10-methylenetetrahydrofolate (mTHF) as the methyl donor and reductant in the reaction, yielding dihydrofolate (DHF) as a by-product. This enzymatic reaction provides an intracellular de novo source of dTMP, an essential precursor for DNA biosynthesis. This chain is Thymidylate synthase, found in Streptococcus thermophilus (strain ATCC BAA-250 / LMG 18311).